The primary structure comprises 821 residues: Leucine--tRNA ligase (821 aa).

The 'HIGH' region motif lies at 40–50; that stretch reads PYPSGRIHMGH. The 'KMSKS' region motif lies at 586 to 590; it reads KMSKS. Residue K589 participates in ATP binding.

The protein belongs to the class-I aminoacyl-tRNA synthetase family.

Its subcellular location is the cytoplasm. It carries out the reaction tRNA(Leu) + L-leucine + ATP = L-leucyl-tRNA(Leu) + AMP + diphosphate. The polypeptide is Leucine--tRNA ligase (Aliarcobacter butzleri (strain RM4018) (Arcobacter butzleri)).